The chain runs to 392 residues: Succinate--CoA ligase [ADP-forming] subunit beta (392 aa).

The ATP-grasp domain occupies 9-244 (KALLAQYGVG…LSEEESSEIE (236 aa)). ATP is bound by residues lysine 46, 53–55 (GRG), glutamate 99, leucine 102, and glutamate 107. Positions 199 and 213 each coordinate Mg(2+). Substrate is bound by residues asparagine 264 and 321-323 (GIV).

Belongs to the succinate/malate CoA ligase beta subunit family. In terms of assembly, heterotetramer of two alpha and two beta subunits. Mg(2+) is required as a cofactor.

The catalysed reaction is succinate + ATP + CoA = succinyl-CoA + ADP + phosphate. It carries out the reaction GTP + succinate + CoA = succinyl-CoA + GDP + phosphate. The protein operates within carbohydrate metabolism; tricarboxylic acid cycle; succinate from succinyl-CoA (ligase route): step 1/1. In terms of biological role, succinyl-CoA synthetase functions in the citric acid cycle (TCA), coupling the hydrolysis of succinyl-CoA to the synthesis of either ATP or GTP and thus represents the only step of substrate-level phosphorylation in the TCA. The beta subunit provides nucleotide specificity of the enzyme and binds the substrate succinate, while the binding sites for coenzyme A and phosphate are found in the alpha subunit. The polypeptide is Succinate--CoA ligase [ADP-forming] subunit beta (Wolinella succinogenes (strain ATCC 29543 / DSM 1740 / CCUG 13145 / JCM 31913 / LMG 7466 / NCTC 11488 / FDC 602W) (Vibrio succinogenes)).